Reading from the N-terminus, the 302-residue chain is Sulfate adenylyltransferase subunit 2 (302 aa).

Belongs to the PAPS reductase family. CysD subfamily. Heterodimer composed of CysD, the smaller subunit, and CysN.

It carries out the reaction sulfate + ATP + H(+) = adenosine 5'-phosphosulfate + diphosphate. It functions in the pathway sulfur metabolism; hydrogen sulfide biosynthesis; sulfite from sulfate: step 1/3. Functionally, with CysN forms the ATP sulfurylase (ATPS) that catalyzes the adenylation of sulfate producing adenosine 5'-phosphosulfate (APS) and diphosphate, the first enzymatic step in sulfur assimilation pathway. APS synthesis involves the formation of a high-energy phosphoric-sulfuric acid anhydride bond driven by GTP hydrolysis by CysN coupled to ATP hydrolysis by CysD. This Salmonella schwarzengrund (strain CVM19633) protein is Sulfate adenylyltransferase subunit 2.